The sequence spans 91 residues: Small ribosomal subunit protein uS19 (91 aa).

This sequence belongs to the universal ribosomal protein uS19 family.

Functionally, protein S19 forms a complex with S13 that binds strongly to the 16S ribosomal RNA. The polypeptide is Small ribosomal subunit protein uS19 (Amoebophilus asiaticus (strain 5a2)).